Here is a 633-residue protein sequence, read N- to C-terminus: Chaperone protein HtpG (633 aa).

The segment at 1 to 341 (MTAPHETMSF…SADLPLNVSR (341 aa)) is a; substrate-binding. The b stretch occupies residues 342 to 562 (ELLQESRDVK…DGDMSGYLQR (221 aa)). A c region spans residues 563 to 633 (LLKQAGQKAP…YVQRVNRLLA (71 aa)).

It belongs to the heat shock protein 90 family. Homodimer.

Its subcellular location is the cytoplasm. Functionally, molecular chaperone. Has ATPase activity. In Cupriavidus metallidurans (strain ATCC 43123 / DSM 2839 / NBRC 102507 / CH34) (Ralstonia metallidurans), this protein is Chaperone protein HtpG.